The sequence spans 280 residues: Phosphatidylglycerol--prolipoprotein diacylglyceryl transferase (280 aa).

A run of 4 helical transmembrane segments spans residues 23–43, 58–78, 93–113, and 120–140; these read LRWY…LAGV, LLFW…VLFY, IWTG…ALWW, and CTFL…LGAG. Arginine 141 contributes to the a 1,2-diacyl-sn-glycero-3-phospho-(1'-sn-glycerol) binding site. A run of 3 helical transmembrane segments spans residues 173–193, 200–220, and 241–261; these read PSQL…LWLY, IGAV…FVEF, and QGQI…VWAV.

The protein belongs to the Lgt family.

The protein localises to the cell inner membrane. It catalyses the reaction L-cysteinyl-[prolipoprotein] + a 1,2-diacyl-sn-glycero-3-phospho-(1'-sn-glycerol) = an S-1,2-diacyl-sn-glyceryl-L-cysteinyl-[prolipoprotein] + sn-glycerol 1-phosphate + H(+). It functions in the pathway protein modification; lipoprotein biosynthesis (diacylglyceryl transfer). Its function is as follows. Catalyzes the transfer of the diacylglyceryl group from phosphatidylglycerol to the sulfhydryl group of the N-terminal cysteine of a prolipoprotein, the first step in the formation of mature lipoproteins. This chain is Phosphatidylglycerol--prolipoprotein diacylglyceryl transferase, found in Pseudoalteromonas atlantica (strain T6c / ATCC BAA-1087).